The chain runs to 426 residues: Egl nine homolog 1 (426 aa).

N-acetylalanine is present on Ala-2. The tract at residues 6–20 (GGPGGPSPSERDRQY) is required for nuclear export. Ser-12 carries the post-translational modification Phosphoserine. Zn(2+)-binding residues include Cys-21, Cys-24, Cys-33, Cys-36, Cys-42, His-46, His-54, and Cys-58. The MYND-type; atypical zinc-finger motif lies at 21–58 (CELCGKMENLLRCSRCRSSFYCCKEHQRQDWKKHKLVC). Disordered stretches follow at residues 65 to 129 (LGHG…PCRA) and 160 to 184 (ANLYPPSNTPGDALSPGGGLRPNGQ). The segment covering 77 to 87 (PAPPAAVPPPR) has biased composition (pro residues). Over residues 89–103 (GAREPRKAAARRDNA) the composition is skewed to basic and acidic residues. The span at 120–129 (PAAAASPCRA) shows a compositional bias: low complexity. At Ser-125 the chain carries Phosphoserine. S-nitrosocysteine occurs at positions 201 and 208. The beta(2)beta(3) 'finger-like' loop stretch occupies residues 241 to 251 (VSQKSDSSKDI). The region spanning 291 to 392 (KINGRTKAMV…RYAITVWYFD (102 aa)) is the Fe2OG dioxygenase domain. Cys-302 carries the post-translational modification S-nitrosocysteine. His-313 and Asp-315 together coordinate Fe cation. Residues Cys-323 and Cys-326 each carry the S-nitrosocysteine modification. Residue His-374 coordinates Fe cation. 2-oxoglutarate is bound at residue Arg-383.

In terms of assembly, monomer. Interacts with ING4; the interaction inhibits the hydroxylation of HIF alpha proteins. Interacts with PTGES3 (via PXLE motif); thereby recruiting EGLN1 to the HSP90 pathway to facilitate HIF alpha proteins hydroxylation. Interacts with LIMD1. Found in a complex composed of LIMD1, VHL, EGLN1/PHD2, ELOB and CUL2. Interacts with EPAS1. Interacts with CBFA2T3. Interacts with HIF1A. It depends on Fe(2+) as a cofactor. L-ascorbate serves as cofactor. In terms of processing, S-nitrosylation inhibits the enzyme activity up to 60% under aerobic conditions. Chelation of Fe(2+) has no effect on the S-nitrosylation. It is uncertain whether nitrosylation occurs on Cys-323 or Cys-326. In terms of tissue distribution, according to PubMed:11056053, widely expressed with highest levels in skeletal muscle and heart, moderate levels in pancreas, brain (dopaminergic neurons of adult and fetal substantia nigra) and kidney, and lower levels in lung and liver. According to PubMed:12351678 widely expressed with highest levels in brain, kidney and adrenal gland. Expressed in cardiac myocytes, aortic endothelial cells and coronary artery smooth muscle. According to PubMed:12788921; expressed in adult and fetal heart, brain, liver, lung, skeletal muscle and kidney. Also expressed in placenta. Highest levels in adult heart, brain, lung and liver and fetal brain, heart spleen and skeletal muscle.

The protein resides in the cytoplasm. It is found in the nucleus. It carries out the reaction L-prolyl-[hypoxia-inducible factor alpha subunit] + 2-oxoglutarate + O2 = trans-4-hydroxy-L-prolyl-[hypoxia-inducible factor alpha subunit] + succinate + CO2. Its activity is regulated as follows. Following exposure to hypoxia, activated in HeLa cells but not in cardiovascular cells. In terms of biological role, cellular oxygen sensor that catalyzes, under normoxic conditions, the post-translational formation of 4-hydroxyproline in hypoxia-inducible factor (HIF) alpha proteins. Hydroxylates a specific proline found in each of the oxygen-dependent degradation (ODD) domains (N-terminal, NODD, and C-terminal, CODD) of HIF1A. Also hydroxylates HIF2A. Has a preference for the CODD site for both HIF1A and HIF1B. Hydroxylated HIFs are then targeted for proteasomal degradation via the von Hippel-Lindau ubiquitination complex. Under hypoxic conditions, the hydroxylation reaction is attenuated allowing HIFs to escape degradation resulting in their translocation to the nucleus, heterodimerization with HIF1B, and increased expression of hypoxy-inducible genes. EGLN1 is the most important isozyme under normoxia and, through regulating the stability of HIF1, involved in various hypoxia-influenced processes such as angiogenesis in retinal and cardiac functionality. Target proteins are preferentially recognized via a LXXLAP motif. The polypeptide is Egl nine homolog 1 (Homo sapiens (Human)).